The primary structure comprises 87 residues: Pyocin-S2 immunity protein (87 aa).

Belongs to the colicins ColE2/ColE8/ColE9 and pyocins S1/S2 family.

This is Pyocin-S2 immunity protein (imm2) from Pseudomonas aeruginosa (strain ATCC 15692 / DSM 22644 / CIP 104116 / JCM 14847 / LMG 12228 / 1C / PRS 101 / PAO1).